Reading from the N-terminus, the 420-residue chain is 3-isopropylmalate dehydratase large subunit (420 aa).

Positions 300, 361, and 364 each coordinate [4Fe-4S] cluster.

Belongs to the aconitase/IPM isomerase family. LeuC type 2 subfamily. As to quaternary structure, heterodimer of LeuC and LeuD. Requires [4Fe-4S] cluster as cofactor.

It carries out the reaction (2R,3S)-3-isopropylmalate = (2S)-2-isopropylmalate. Its pathway is amino-acid biosynthesis; L-leucine biosynthesis; L-leucine from 3-methyl-2-oxobutanoate: step 2/4. Its function is as follows. Catalyzes the isomerization between 2-isopropylmalate and 3-isopropylmalate, via the formation of 2-isopropylmaleate. The protein is 3-isopropylmalate dehydratase large subunit of Endomicrobium trichonymphae.